Reading from the N-terminus, the 344-residue chain is MAETRRKVLEVLNGKSLTPPPIWLMRQAGRYLPEYRATRAKAGSFLDLCYTPDLAVEVTLQPIRRYAFDAAILFSDILVIPDALHRNVRFEEGHGPRMDPIDTDGIAGLKADGILSHLSPVFETVARLRRELPEETTLLGFCGAPWTVATYMIAGRGTPDQAPARLFAYRHPKAFEELLAFLADVSADYLVAQIDAGADAVQIFDSWAGVLGEDEFARFAVEPVRRMIASVRARRPSAKIIAFAKGAGLLLKDYRRLTGADAIGLDWAVPLAFAAELQKDGPVQGNLDPMRVVAGGGAMESGIDRILDVLGNGPLIFNLGHGITPEADPENVSALVARVRGTKG.

Residues 26–30 (RQAGR), Asp-76, Tyr-151, Ser-206, and His-321 each bind substrate.

It belongs to the uroporphyrinogen decarboxylase family. In terms of assembly, homodimer.

Its subcellular location is the cytoplasm. It carries out the reaction uroporphyrinogen III + 4 H(+) = coproporphyrinogen III + 4 CO2. Its pathway is porphyrin-containing compound metabolism; protoporphyrin-IX biosynthesis; coproporphyrinogen-III from 5-aminolevulinate: step 4/4. Catalyzes the decarboxylation of four acetate groups of uroporphyrinogen-III to yield coproporphyrinogen-III. The chain is Uroporphyrinogen decarboxylase from Sinorhizobium fredii (strain NBRC 101917 / NGR234).